Reading from the N-terminus, the 79-residue chain is MKYVALAFVLSLVILQISAQGGGLTSLLLQKEYMPDSWFDYKLAQMILGGPTGRKSRTQSGRNQRKSNSDSWLWLALAN.

A signal peptide spans 1–19 (MKYVALAFVLSLVILQISA).

In terms of tissue distribution, nacreous layer of shell (at protein level). Expressed primarily in the mantle with highest level in the mantle pallium and lower level in the mantle edge.

It localises to the secreted. This is an uncharacterized protein from Pinctada maxima (Silver-lipped pearl oyster).